The sequence spans 332 residues: Junctional sarcoplasmic reticulum protein 1 (332 aa).

Residues 1-80 (MTTRGLEDLD…EKELAGKEST (80 aa)) form a mediates interaction with CACNA1S region. Disordered stretches follow at residues 1-125 (MTTR…PWGD) and 159-332 (APHP…KGRD). T51 bears the Phosphothreonine mark. The segment covering 66–76 (GLKKMEKELAG) has biased composition (basic and acidic residues). Composition is skewed to pro residues over residues 98–116 (QAPP…PPRT) and 177–197 (APKP…PGPP). Over residues 221 to 232 (GGSISEASGEES) the composition is skewed to low complexity. A phosphoserine mark is found at S223 and S228. Basic and acidic residues-rich tracts occupy residues 239–256 (GSQE…EKLK) and 283–307 (RRWE…EHGK).

In terms of assembly, interacts with CACNA1S, CACNB1 and calsequestrin. As to expression, specifically expressed in skeletal muscle. Detected in skeletal muscle and tongue (at protein level).

The protein resides in the sarcoplasmic reticulum membrane. The protein localises to the endoplasmic reticulum membrane. In terms of biological role, involved in skeletal muscle excitation/contraction coupling (EC), probably acting as a regulator of the voltage-sensitive calcium channel CACNA1S. EC is a physiological process whereby an electrical signal (depolarization of the plasma membrane) is converted into a chemical signal, a calcium gradient, by the opening of ryanodine receptor calcium release channels. May regulate CACNA1S membrane targeting and activity. The sequence is that of Junctional sarcoplasmic reticulum protein 1 (Jsrp1) from Mus musculus (Mouse).